Consider the following 340-residue polypeptide: Solute carrier family 35 member G3 (340 aa).

The tract at residues 11-33 (PDFTQPSPPSTPASLPSKHHHRC) is disordered. Transmembrane regions (helical) follow at residues 39–59 (TKGLFVALLGGGLSAGFVGPF), 69–89 (LPSLELLIFRCLFHLPIALLL), 107–127 (FLHAILNVLSIGCAYSAVQVV), 160–180 (AWCGLFGSTLGLIIIVGPGLG), 189–209 (LYTALGYVLAFLGGLALSLGL), 223–243 (TVAFLFGLVGLMVSVPGLFVL), 257–277 (CVVAVGLLALVSFVCVSYAVT), 283–303 (LVCAVLHSEVVVALMLQYYVL), and 307–327 (VAPSDIMGAGVVLGSIAIITA). Positions 51–176 (LSAGFVGPFS…STLGLIIIVG (126 aa)) constitute an EamA 1 domain. The EamA 2 domain maps to 274–327 (YAVTKAHPALVCAVLHSEVVVALMLQYYVLYETVAPSDIMGAGVVLGSIAIITA).

Belongs to the SLC35G solute transporter family.

Its subcellular location is the membrane. In Mus musculus (Mouse), this protein is Solute carrier family 35 member G3 (Slc35g3).